Here is a 48-residue protein sequence, read N- to C-terminus: Large ribosomal subunit protein bL32 (48 aa).

The protein belongs to the bacterial ribosomal protein bL32 family.

The sequence is that of Large ribosomal subunit protein bL32 from Helicobacter pylori (strain P12).